The primary structure comprises 211 residues: Pyridoxine/pyridoxamine 5'-phosphate oxidase (211 aa).

Residues 8–11 (RRDY) and Lys66 each bind substrate. FMN contacts are provided by residues 61-66 (RLVLLK), 76-77 (FT), Arg82, Lys83, and Gln105. The substrate site is built by Tyr123, Arg127, and Ser131. Residues 140 to 141 (QS) and Trp184 contribute to the FMN site. 190–192 (RLH) contributes to the substrate binding site. Arg194 is a binding site for FMN.

Belongs to the pyridoxamine 5'-phosphate oxidase family. Homodimer. The cofactor is FMN.

The enzyme catalyses pyridoxamine 5'-phosphate + O2 + H2O = pyridoxal 5'-phosphate + H2O2 + NH4(+). The catalysed reaction is pyridoxine 5'-phosphate + O2 = pyridoxal 5'-phosphate + H2O2. Its pathway is cofactor metabolism; pyridoxal 5'-phosphate salvage; pyridoxal 5'-phosphate from pyridoxamine 5'-phosphate: step 1/1. It participates in cofactor metabolism; pyridoxal 5'-phosphate salvage; pyridoxal 5'-phosphate from pyridoxine 5'-phosphate: step 1/1. Catalyzes the oxidation of either pyridoxine 5'-phosphate (PNP) or pyridoxamine 5'-phosphate (PMP) into pyridoxal 5'-phosphate (PLP). The chain is Pyridoxine/pyridoxamine 5'-phosphate oxidase from Thermosynechococcus vestitus (strain NIES-2133 / IAM M-273 / BP-1).